The following is an 86-amino-acid chain: Bradykinin-potentiating peptide 25.12 (86 aa).

An N-terminal signal peptide occupies residues 1-22; sequence MNKRVLLVIFFVTLLIADEVNS. The tract at residues 67-86 is disordered; that stretch reads APAAAAAPEEPPVEQRRRRR.

This sequence belongs to the non-disulfide-bridged peptide (NDBP) superfamily. Long chain multifunctional peptide (group 2) family. Expressed by the venom gland.

The protein resides in the secreted. In terms of biological role, inhibits angiotensin-converting enzyme (ACE), but does not serve as substrate for the enzyme. Potentiates bradykinin (BK) on the isolated guinea pig ileum as well as the isolated rat uterus for contraction. Also potentiates in vivo the depressor effect of BK on arterial blood pressure in the normotensive anesthetized rat. The chain is Bradykinin-potentiating peptide 25.12 from Lychas mucronatus (Chinese swimming scorpion).